We begin with the raw amino-acid sequence, 417 residues long: Pigment epithelium-derived factor (417 aa).

The signal sequence occupies residues 1–19 (MQALVLLLWTGALLGHGSS). The tract at residues 17-41 (GSSQNVPSSSEGSPVPDSTGEPVEE) is disordered. The span at 18-28 (SSQNVPSSSEG) shows a compositional bias: polar residues. Pyrrolidone carboxylic acid is present on Gln20. Ser24 is modified (phosphoserine). The N-linked (GlcNAc...) asparagine glycan is linked to Asn284.

Belongs to the serpin family. Interacts with PNPLA2; this interaction stimulates the phospholipase A2 activity of PNPLA2. As to expression, highly expressed in the liver, gastric glandular mucosa and renal tubules. It is also expressed in the brain, heart, lung retina and testes.

It localises to the secreted. The protein resides in the melanosome. In terms of biological role, neurotrophic protein; induces extensive neuronal differentiation in retinoblastoma cells. Potent inhibitor of angiogenesis. As it does not undergo the S (stressed) to R (relaxed) conformational transition characteristic of active serpins, it exhibits no serine protease inhibitory activity. This chain is Pigment epithelium-derived factor (Serpinf1), found in Mus musculus (Mouse).